The chain runs to 263 residues: UPF0739 protein C1orf74 homolog (263 aa).

Belongs to the UPF0739 family.

In Rattus norvegicus (Rat), this protein is UPF0739 protein C1orf74 homolog.